Here is a 632-residue protein sequence, read N- to C-terminus: Tetratricopeptide repeat protein 39B (632 aa).

3 TPR repeats span residues 343-376, 535-568, and 576-609; these read SLVL…QEEW, CLVK…EKLL, and PFTL…YKDY.

The protein belongs to the TTC39 family.

Its function is as follows. Regulates high density lipoprotein (HDL) cholesterol metabolism by promoting the ubiquitination and degradation of the oxysterols receptors LXR (NR1H2 and NR1H3). This is Tetratricopeptide repeat protein 39B (TTC39B) from Macaca fascicularis (Crab-eating macaque).